A 2028-amino-acid polypeptide reads, in one-letter code: Phosphatidylinositol 4-kinase alpha 1 (2028 aa).

Positions 184 to 241 (PASPKEQRQQNSANSETDTSSSQGSPISTNRYPSGKTEMASPGDEVASHGSNLSSKSS) are disordered. Residues 192–215 (QQNSANSETDTSSSQGSPISTNRY) are compositionally biased toward polar residues. Positions 231 to 241 (SHGSNLSSKSS) are enriched in low complexity. One can recognise a PIK helical domain in the interval 1483–1659 (TEYAKTAFSV…NAAFQEILPQ (177 aa)). The interval 1660–1773 (VRQHIIDGFS…VKPQACIFKV (114 aa)) is pleckstrin homology (PH) domain conferring phosphoinositide binding specificity. A PI3K/PI4K catalytic domain is found at 1734–2012 (VDSGIPLQSA…VCTDAYNKWT (279 aa)). The segment at 1740–1746 (LQSAAKV) is G-loop. Positions 1876–1884 (QPKDRHNGN) are catalytic loop. Residues 1895–1920 (HIDFGFILETSPGGNMRFESAHFKLS) are activation loop.

The protein belongs to the PI3/PI4-kinase family. Type III PI4K subfamily. In terms of assembly, interacts in vitro with actin filaments via its PH domain. In terms of tissue distribution, present in leaves and inflorescences.

It is found in the membrane. It localises to the cytoplasm. The protein resides in the perinuclear region. It catalyses the reaction a 1,2-diacyl-sn-glycero-3-phospho-(1D-myo-inositol) + ATP = a 1,2-diacyl-sn-glycero-3-phospho-(1D-myo-inositol 4-phosphate) + ADP + H(+). Its activity is regulated as follows. Repressed by PtdIns4P, adenosine and wortmannin, but stimulated by other negatively charged lipids such as PtdIns3P, PtdOH, and phosphatidyl-serine (PtdSer). Acts on phosphatidylinositol (PtdIns) in the first committed step in the production of the second messenger inositol-1,4,5,-trisphosphate. Can bind to phosphatidylinositol 4-monophosphate (PI-4-P or PtdIns4P), phosphatidylinositol 4,5-bisphosphate (PI-4,5-P2 or PtdIns4,5P2), and phosphatidic acid (PtdOH), but not to 3-phosphoinositides. May function upstream of the cold response phosphoinositide-dependent phospholipase C (PI-PLC) pathway. In Arabidopsis thaliana (Mouse-ear cress), this protein is Phosphatidylinositol 4-kinase alpha 1.